The following is a 626-amino-acid chain: Probable potassium transport system protein Kup 3 (626 aa).

A run of 12 helical transmembrane segments spans residues 10–30, 51–71, 107–127, 141–161, 173–193, 216–236, 251–271, 293–313, 341–361, 371–391, 401–421, and 423–443; these read LATL…TSPL, VLGI…LKYV, VLLG…TPAI, PAFK…LFIF, FGPV…AAIV, LLGF…EALY, WLGY…ALLL, LVAL…SGAF, IYLP…VIEF, YGIA…AVAV, AMLG…ANSV, and IADG…LLTT.

Belongs to the HAK/KUP transporter (TC 2.A.72) family.

It is found in the cell inner membrane. It carries out the reaction K(+)(in) + H(+)(in) = K(+)(out) + H(+)(out). In terms of biological role, transport of potassium into the cell. Likely operates as a K(+):H(+) symporter. This chain is Probable potassium transport system protein Kup 3, found in Dechloromonas aromatica (strain RCB).